A 1446-amino-acid chain; its full sequence is MADDLFDFIETEGNFSQLLAAAAAAEEEGIASGPDGGSQGSRRRGSSGEDLLFGPGGLFSDDAAEAEAAVLAAAAGATRPPRPPSAQQQQQPRRGSGEIVVLDDEDEEEDEPGSPAAGSPGRALHQGSEHGHLVLGPRSRAGSGPRPPTPAALAAAEAGAPGGPGRSSPSAASPASSSGSPGPSAAPRRWSPARGDPVGEPGPAARPRTPAPPAQPAAVAAAPARRGPASPASPAAGPVSAPGGGGAPSAGGDRGRHHHQHREPLLDEPAAARRLDPRPLGARSPVSSNPNSNSNSTTTVAVETVARGPEKDEDGLGLAGDGGAPPQRQPRRRRAGEGALRRGRGFSSSSSSGSDSDLSPARSPSAPRAPAAAARRSASSSSSSSSSSSSSSSSSSSEGEEDEGVRPGAPLARAGPPPSPPAPAAAPRPSASSASSSAAASPAPAPEPARPPRRKRRSTNNHLSLMADGPPPTDGPLLTPLGEPWPGSDPPADGRVRYGGAGDSREGLWDEDDVRQAAARYRAAAGPVPVFIPEMGDSRKQHEALVRLIYSGAAGEAMSWLQNPRMQAPDQRFNQFCQRRVHAPHGHGSFITGSVTPPLPHIGDAMAAQDPLWALPHAVSAVAMSRRYDRTQKTFILQSLRRAYADMAYPGRAADPRAGEATVEALCARVRAAFAAAQPGRVPRELADACVLACRGVLERLLPCPLRLPAPARAPAALGPACLEEVTAALLALRDAIPGAGPAERRQAADSVALVARTVAPLVRYSVDGARAREAAWTYAAALFAPANVAAARLAEAAARPGPAEPAPGLPPLWPEQPGLVVPAPAPAAAGAPSGLPGSGPSSPASTKSSSSTKSSSSTKSGLSGSSGYASSPAAGPDPAPERRKKKRRAPGARRPGDGEEDEGLSGAALRGDGHGHRDDEEDRGPRRKRRSLGLGPAPDPAPALLSSSSSSSEDDRLRRPLGPMPEHPAPDGGFRRVPAGETHTPRPSEAALAAYCPPEVARALVDQEVFPELWRPALTFDPAALAHIAARRGAPLRRRAAWMRQIADPEDVRVVVLYDPLPHEELCAEPAEGAPRPAWDPRRGGLSALLAAFAHRLCTPDSHAWAGNWTGRPDIGRLNAQGVLLLSARDLGFAGAVEYLCSRLGAARRRLIVLDTIEDWPADGPAVGDYHVYVRVRLDPAAQCAVRWPGCRELRAAVLDSSSIVGPACFARVEASFARLHPGAEPLRLCRQDNVRYTVSTRAGPRTPVPLPPRAYRQRVLPTVDGCKDMARQRSALGLGDPDFDAGAAFGHRAANRWGLGAPLRPVFVSCGRRGLAELRGPEGLPAELRAFCAAALLEPDAEAAPLVLTPGAVAAAGAPPAVLWDFAPFETSVRAAAGGAVETHRPAGASGAGAGPGEDGDSVEIVGVRGGDGRPRGPLGPIKVEAISDDEEAEDAGNPYLLLR.

4 disordered regions span residues 25 to 59 (AEEE…GGLF), 73 to 493 (AAAG…PPAD), 801 to 987 (PGPA…HTPR), and 1385 to 1446 (THRP…LLLR). The span at 73–94 (AAAGATRPPRPPSAQQQQQPRR) shows a compositional bias: low complexity. A compositionally biased stretch (acidic residues) spans 101-112 (VLDDEDEEEDEP). Composition is skewed to low complexity over residues 166–189 (RSSP…APRR) and 216–241 (PAAV…PVSA). Residues 262 to 277 (REPLLDEPAAARRLDP) are compositionally biased toward basic and acidic residues. Low complexity-rich tracts occupy residues 284-306 (SPVS…ETVA) and 345-397 (GFSS…SSSS). A compositionally biased stretch (pro residues) spans 415–426 (GPPPSPPAPAAA). The span at 427–442 (PRPSASSASSSAAASP) shows a compositional bias: low complexity. Pro residues predominate over residues 803 to 815 (PAEPAPGLPPLWP). The segment covering 827–877 (PAAAGAPSGLPGSGPSSPASTKSSSSTKSSSSTKSGLSGSSGYASSPAAGP) has biased composition (low complexity). The span at 883 to 892 (RRKKKRRAPG) shows a compositional bias: basic residues. The segment covering 933–952 (LGLGPAPDPAPALLSSSSSS) has biased composition (low complexity).

It belongs to the herpesviridae ICP4 family. A long stretch of serine residues may be a major site of phosphorylation.

The protein resides in the host nucleus. Functionally, this IE protein is a multifunctional protein capable of migrating to the nucleus, binding to DNA, trans-activating other viral genes, and autoregulating its own synthesis. This Suid herpesvirus 1 (strain Kaplan) (SuHV-1) protein is Major viral transcription factor ICP4 homolog (IE).